Reading from the N-terminus, the 281-residue chain is Bifunctional protein FolD 1 (281 aa).

Residues 165-167, Ser-190, and Ile-231 each bind NADP(+); that span reads GRS.

This sequence belongs to the tetrahydrofolate dehydrogenase/cyclohydrolase family. As to quaternary structure, homodimer.

It catalyses the reaction (6R)-5,10-methylene-5,6,7,8-tetrahydrofolate + NADP(+) = (6R)-5,10-methenyltetrahydrofolate + NADPH. The catalysed reaction is (6R)-5,10-methenyltetrahydrofolate + H2O = (6R)-10-formyltetrahydrofolate + H(+). Its pathway is one-carbon metabolism; tetrahydrofolate interconversion. Its function is as follows. Catalyzes the oxidation of 5,10-methylenetetrahydrofolate to 5,10-methenyltetrahydrofolate and then the hydrolysis of 5,10-methenyltetrahydrofolate to 10-formyltetrahydrofolate. This is Bifunctional protein FolD 1 from Desulfitobacterium hafniense (strain Y51).